Reading from the N-terminus, the 155-residue chain is Perlucin (155 aa).

Disulfide bonds link cysteine 2–cysteine 13, cysteine 30–cysteine 127, and cysteine 102–cysteine 119. The 120-residue stretch at 9-128 (NRRSCYWFST…CQKPSHFICE (120 aa)) folds into the C-type lectin domain. A glycan (N-linked (GlcNAc...) asparagine) is linked at asparagine 84. 2 consecutive repeat copies span residues 136 to 145 (NSLHANLQQR) and 146 to 155 (DSLHANLQQR).

Glycosylated.

In terms of biological role, may promote nucleation and/or growth of calcium carbonate crystals. Binds to D-galactose and D-mannose/D-glucose. This chain is Perlucin, found in Haliotis laevigata (Smooth Australian abalone).